The chain runs to 84 residues: Cell division topological specificity factor (84 aa).

Belongs to the MinE family.

Its function is as follows. Prevents the cell division inhibition by proteins MinC and MinD at internal division sites while permitting inhibition at polar sites. This ensures cell division at the proper site by restricting the formation of a division septum at the midpoint of the long axis of the cell. The sequence is that of Cell division topological specificity factor from Ralstonia pickettii (strain 12J).